Consider the following 258-residue polypeptide: MLAVVSPAKNLDYESDLPELNVTQPRLLDNAEELVEVCRQLSPQQLGSLMKISDKLAGLNAARFEEWQRPFNENNARPAMYAFNGDVYTGLDAASLNSEAIGTAQKQLRILSGLYGVLRPLDLMQPYRLEMGTKLDNPKGKNLYEYWGDSITQMLNKDLAELGSSTLVNLASNEYFSAVKPKVLNADIITPVFKDEKNGQYKVISFYAKKARGLMARFILNQKPKSVSDLKEFDANGYSFNEAMSSDKQLVFCRAEQK.

The protein belongs to the UPF0246 family.

This is UPF0246 protein IL2146 from Idiomarina loihiensis (strain ATCC BAA-735 / DSM 15497 / L2-TR).